We begin with the raw amino-acid sequence, 712 residues long: Small ribosomal subunit protein uS3c (712 aa).

An S3-like 1st part region spans residues 1-118; it reads MGQKVHPLGF…IKVSKDLVTN (118 aa). An intervening sequence (IVS) region spans residues 119-580; the sequence is LQKTRKYLFK…LQTAFLTQIE (462 aa). Residues 581 to 712 are S3-like 2nd part; the sequence is SQRKMYKANL…VWIFKGYSKI (132 aa).

It belongs to the universal ribosomal protein uS3 family. As to quaternary structure, part of the 30S ribosomal subunit.

It is found in the plastid. It localises to the chloroplast. The sequence is that of Small ribosomal subunit protein uS3c (rps3) from Chlamydomonas reinhardtii (Chlamydomonas smithii).